Reading from the N-terminus, the 525-residue chain is GMP synthase [glutamine-hydrolyzing] (525 aa).

Residues 9 to 207 (RILILDFGSQ…VQDICGCEAL (199 aa)) form the Glutamine amidotransferase type-1 domain. C86 (nucleophile) is an active-site residue. Catalysis depends on residues H181 and E183. The GMPS ATP-PPase domain maps to 208–400 (WTPSNIVEDA…LGLPYDMVYR (193 aa)). ATP is bound at residue 235–241 (SGGVDSS).

In terms of assembly, homodimer.

It catalyses the reaction XMP + L-glutamine + ATP + H2O = GMP + L-glutamate + AMP + diphosphate + 2 H(+). Its pathway is purine metabolism; GMP biosynthesis; GMP from XMP (L-Gln route): step 1/1. Its function is as follows. Catalyzes the synthesis of GMP from XMP. The protein is GMP synthase [glutamine-hydrolyzing] of Pseudomonas putida (strain W619).